Here is a 261-residue protein sequence, read N- to C-terminus: Putative outer membrane protein TC_0650 (261 aa).

An N-terminal signal peptide occupies residues 1 to 17 (MRFLFAFILLCSPWVSE).

It localises to the cell outer membrane. This is Putative outer membrane protein TC_0650 from Chlamydia muridarum (strain MoPn / Nigg).